A 303-amino-acid polypeptide reads, in one-letter code: N-acetyl-D-glucosamine kinase (303 aa).

Residues 4 to 11 (GFDIGGTK) and 133 to 140 (GVGGGLVL) each bind ATP. Residues H157, C177, C179, and C184 each coordinate Zn(2+).

It belongs to the ROK (NagC/XylR) family. NagK subfamily.

It catalyses the reaction N-acetyl-D-glucosamine + ATP = N-acetyl-D-glucosamine 6-phosphate + ADP + H(+). Its pathway is cell wall biogenesis; peptidoglycan recycling. In terms of biological role, catalyzes the phosphorylation of N-acetyl-D-glucosamine (GlcNAc) derived from cell-wall degradation, yielding GlcNAc-6-P. This Salmonella agona (strain SL483) protein is N-acetyl-D-glucosamine kinase.